The primary structure comprises 255 residues: Poxin (255 aa).

Belongs to the poxin family. Highly divergent.

The catalysed reaction is 2',3'-cGAMP + H2O = Gp(2'-5')Ap(3') + H(+). In terms of biological role, nuclease that cleaves 2',3'-cGAMP. This Bombyx mori (Silk moth) protein is Poxin.